Here is a 392-residue protein sequence, read N- to C-terminus: PMA1 stabilization in the Golgi protein 1 (392 aa).

The first 22 residues, 1-22 (MRFHDSILIFFSLASLYQHVHG), serve as a signal peptide directing secretion. Residues Thr34 and Thr35 are each glycosylated (O-linked (Man) threonine). An O-linked (Man) serine glycan is attached at Ser36. The O-linked (Man) threonine glycan is linked to Thr45. An O-linked (Man) serine glycan is attached at Ser49. Residues Thr55, Thr57, and Thr63 are each glycosylated (O-linked (Man) threonine). Ser65 is a glycosylation site (O-linked (Man) serine). The O-linked (Man) threonine glycan is linked to Thr71. The O-linked (Man) serine glycan is linked to Ser80. Residues Thr89 and Thr99 are each glycosylated (O-linked (Man) threonine). Ser107 is a glycosylation site (O-linked (Man) serine). O-linked (Man) threonine glycosylation is found at Thr108 and Thr112. Residues Ser114 and Ser115 are each glycosylated (O-linked (Man) serine). O-linked (Man) threonine glycosylation is present at Thr117. Residues Ser119 and Ser148 are each glycosylated (O-linked (Man) serine). O-linked (Man) threonine glycosylation occurs at Thr156. An O-linked (Man) serine glycan is attached at Ser171. A glycan (O-linked (Man) threonine) is linked at Thr176. The O-linked (Man) serine glycan is linked to Ser181. O-linked (Man) threonine glycans are attached at residues Thr188, Thr192, Thr195, and Thr199. Ser203 and Ser215 each carry an O-linked (Man) serine glycan. Residues 230-317 (DIPATFFSSE…DAGITNDQWY (88 aa)) are Lumenal-facing. Residues 318 to 338 (YVALSIPTVVVVFFVFMYFFL) traverse the membrane as a helical segment. Topologically, residues 339 to 392 (YVNGKNRDFTDVTRKALNKKRRVLGKFSEMKKFKNMKNHKYTELPSYKKTSKQN) are cytoplasmic.

As to quaternary structure, interacts with EXP1. PSG1-N' interacts with ERAD-related proteins involved in PMA1 quality control including EPS1, CDC48, UBX2 and SSM4. PSG1-C' interacts with the TLG1/2 SNARE complex proteins TLG1, TLG2 and VTI1. Post-translationally, the precursor protein is cleaved into two polypeptide chains, PSG1-N' and PSG1-C'. The cleavage is performed in the Golgi apparatus by Ca(+)-dependent serine protease KEX2 between Arg-229 and Asp-230. PSG1-N' is highly O-mannosylated.

Its subcellular location is the golgi apparatus lumen. The protein localises to the cytoplasmic vesicle. It is found in the COPI-coated vesicle membrane. In terms of biological role, with EXP1, the specific cargo receptor protein for the plasma membrane ATPase PMA1, is involved in the transport and/or maturation of PMA1. EXP1 and PSG1 probably act sequentially to promote PMA1 sorting between the ER and the Golgi, with EXP1 promoting PMA1 export from the ER to the Golgi while PSG1 has a role in PMA1 maturation or quality control in the Golgi. PSG1 might also couple PMA1 sorting and maturation in the early secretory pathway with the glycosylation machinery. Its function is as follows. PSG1 is cleaved by KEX2 in two stable peptides, PSG1-N' and PSG1-C', the former supporting a role in maturation quality control, the latter having a role in modulating vesicular trafficking. The polypeptide is PMA1 stabilization in the Golgi protein 1 (Saccharomyces cerevisiae (strain ATCC 204508 / S288c) (Baker's yeast)).